A 186-amino-acid chain; its full sequence is Elongation factor P (186 aa).

This sequence belongs to the elongation factor P family.

Its subcellular location is the cytoplasm. The protein operates within protein biosynthesis; polypeptide chain elongation. Functionally, involved in peptide bond synthesis. Stimulates efficient translation and peptide-bond synthesis on native or reconstituted 70S ribosomes in vitro. Probably functions indirectly by altering the affinity of the ribosome for aminoacyl-tRNA, thus increasing their reactivity as acceptors for peptidyl transferase. This Streptococcus gordonii (strain Challis / ATCC 35105 / BCRC 15272 / CH1 / DL1 / V288) protein is Elongation factor P.